We begin with the raw amino-acid sequence, 500 residues long: Cytochrome P450 2C11 (500 aa).

Cysteine 435 serves as a coordination point for heme.

The protein belongs to the cytochrome P450 family. It depends on heme as a cofactor. As to expression, liver and kidney; male-specific.

The protein resides in the endoplasmic reticulum membrane. The protein localises to the microsome membrane. The catalysed reaction is an organic molecule + reduced [NADPH--hemoprotein reductase] + O2 = an alcohol + oxidized [NADPH--hemoprotein reductase] + H2O + H(+). It catalyses the reaction testosterone + reduced [NADPH--hemoprotein reductase] + O2 = 2alpha,17beta-dihydroxyandrost-4-en-3-one + oxidized [NADPH--hemoprotein reductase] + H2O + H(+). It carries out the reaction testosterone + reduced [NADPH--hemoprotein reductase] + O2 = 16alpha,17beta-dihydroxyandrost-4-en-3-one + oxidized [NADPH--hemoprotein reductase] + H2O + H(+). The enzyme catalyses (5Z,8Z,11Z,14Z)-eicosatetraenoate + reduced [NADPH--hemoprotein reductase] + O2 = (8R,9S)-epoxy-(5Z,11Z,14Z)-eicosatrienoate + oxidized [NADPH--hemoprotein reductase] + H2O + H(+). The catalysed reaction is (5Z,8Z,11Z,14Z)-eicosatetraenoate + reduced [NADPH--hemoprotein reductase] + O2 = (8S,9R)-epoxy-(5Z,11Z,14Z)-eicosatrienoate + oxidized [NADPH--hemoprotein reductase] + H2O + H(+). It catalyses the reaction (5Z,8Z,11Z,14Z)-eicosatetraenoate + reduced [NADPH--hemoprotein reductase] + O2 = (11R,12S)-epoxy-(5Z,8Z,14Z)-eicosatrienoate + oxidized [NADPH--hemoprotein reductase] + H2O + H(+). It carries out the reaction (5Z,8Z,11Z,14Z)-eicosatetraenoate + reduced [NADPH--hemoprotein reductase] + O2 = (11S,12R)-epoxy-(5Z,8Z,14Z)-eicosatrienoate + oxidized [NADPH--hemoprotein reductase] + H2O + H(+). The enzyme catalyses (5Z,8Z,11Z,14Z)-eicosatetraenoate + reduced [NADPH--hemoprotein reductase] + O2 = (14R,15S)-epoxy-(5Z,8Z,11Z)-eicosatrienoate + oxidized [NADPH--hemoprotein reductase] + H2O + H(+). The catalysed reaction is (5Z,8Z,11Z,14Z)-eicosatetraenoate + reduced [NADPH--hemoprotein reductase] + O2 = (14S,15R)-epoxy-(5Z,8Z,11Z)-eicosatrienoate + oxidized [NADPH--hemoprotein reductase] + H2O + H(+). It catalyses the reaction (5Z,8Z,11Z,14Z,17Z)-eicosapentaenoate + reduced [NADPH--hemoprotein reductase] + O2 = 8,9-epoxy-(5Z,11Z,14Z,17Z)-eicosatetraenoate + oxidized [NADPH--hemoprotein reductase] + H2O + H(+). It carries out the reaction (5Z,8Z,11Z,14Z,17Z)-eicosapentaenoate + reduced [NADPH--hemoprotein reductase] + O2 = 11,12-epoxy-(5Z,8Z,14Z,17Z)-eicosatetraenoate + oxidized [NADPH--hemoprotein reductase] + H2O + H(+). The enzyme catalyses (5Z,8Z,11Z,14Z,17Z)-eicosapentaenoate + reduced [NADPH--hemoprotein reductase] + O2 = 14,15-epoxy-(5Z,8Z,11Z,17Z)-eicosatetraenoate + oxidized [NADPH--hemoprotein reductase] + H2O + H(+). The catalysed reaction is (5Z,8Z,11Z,14Z,17Z)-eicosapentaenoate + reduced [NADPH--hemoprotein reductase] + O2 = (17S,18R)-epoxy-(5Z,8Z,11Z,14Z)-eicosatetraenoate + oxidized [NADPH--hemoprotein reductase] + H2O + H(+). It catalyses the reaction (5Z,8Z,11Z,14Z,17Z)-eicosapentaenoate + reduced [NADPH--hemoprotein reductase] + O2 = (17R,18S)-epoxy-(5Z,8Z,11Z,14Z)-eicosatetraenoate + oxidized [NADPH--hemoprotein reductase] + H2O + H(+). It participates in lipid metabolism; arachidonate metabolism. The protein operates within steroid metabolism. Functionally, a cytochrome P450 monooxygenase involved in the metabolism of steroid hormones and fatty acids. Catalyzes the hydroxylation of carbon-hydrogen bonds. Metabolizes testosterone to 2alpha- and 16alpha-hydroxytestosterone. Catalyzes the epoxidation of double bonds of polyunsaturated fatty acids (PUFAs). Converts arachidonic acid (ARA, C20:4(n-6)) primarily to epoxyeicosatrienoic acid (EET) regioisomers, 8,9-, 11,12-, and 14,15-EET, with both R,S and S,R stereochemistry. Preferentially produces 11R,12S-EET enantiomer. To a lesser extent, catalyzes the hydroxylation of arachidonic acid producing hydroxyeicosatetraenoates (HETEs). Metabolizes eicosapentaenoic acid (EPA, C20:5(n-3)) to epoxyeicosatetraenoic acid (EETeTr) regioisomers, 8,9-, 11,12-, 14,15-, and 17,18-EETeTr, preferentially producing 17R,18S-EETeTr enantiomer. Mechanistically, uses molecular oxygen inserting one oxygen atom into a substrate, and reducing the second into a water molecule, with two electrons provided by NADPH via cytochrome P450 reductase (NADPH--hemoprotein reductase). This chain is Cytochrome P450 2C11 (Cyp2c11), found in Rattus norvegicus (Rat).